Consider the following 258-residue polypeptide: 5'-nucleotidase SurE (258 aa).

The a divalent metal cation site is built by aspartate 9, aspartate 10, serine 42, and asparagine 96.

It belongs to the SurE nucleotidase family. The cofactor is a divalent metal cation.

It localises to the cytoplasm. The catalysed reaction is a ribonucleoside 5'-phosphate + H2O = a ribonucleoside + phosphate. In terms of biological role, nucleotidase that shows phosphatase activity on nucleoside 5'-monophosphates. The polypeptide is 5'-nucleotidase SurE (Campylobacter jejuni subsp. doylei (strain ATCC BAA-1458 / RM4099 / 269.97)).